Consider the following 115-residue polypeptide: Na(+)/H(+) antiporter subunit C1 (115 aa).

A run of 3 helical transmembrane segments spans residues Met-1–Leu-21, Ile-28–Gly-48, and Leu-72–Phe-92.

It belongs to the CPA3 antiporters (TC 2.A.63) subunit C family. May form a heterooligomeric complex that consists of seven subunits: mnhA1, mnhB1, mnhC1, mnhD1, mnhE1, mnhF1 and mnhG1.

The protein resides in the cell membrane. Mnh complex is a Na(+)/H(+) antiporter involved in Na(+) excretion. This Staphylococcus epidermidis (strain ATCC 35984 / DSM 28319 / BCRC 17069 / CCUG 31568 / BM 3577 / RP62A) protein is Na(+)/H(+) antiporter subunit C1 (mnhC1).